The sequence spans 781 residues: Mitogen-activated protein kinase 7 (781 aa).

The disordered stretch occupies residues 1–27; it reads MAEPLKEDDGEDGSGEPPGPVKAEPAG. A2 is subject to N-acetylalanine. The interval 2–77 is required for cytoplasmic targeting; the sequence is AEPLKEDDGE…VVSSARRRLT (76 aa). The region spanning 55–347 is the Protein kinase domain; it reads YEIIETIGNG…AAAALRHPFL (293 aa). Residues 61-69 and K84 contribute to the ATP site; that span reads IGNGAYGVV. The required for binding to MAP2K5 stretch occupies residues 78 to 139; sequence GQQVAIKKIP…FKSVYVVLDL (62 aa). The segment at 140–406 is necessary for oligomerization; that stretch reads MESDLHQIIH…QQIRFQPSLQ (267 aa). D182 serves as the catalytic Proton acceptor. A TXY motif is present at residues 219–221; the sequence is TEY. Residues 402–708 are disordered; the sequence is QPSLQPVASE…PKGSGAGYGV (307 aa). The may not be required for kinase activity; required to stimulate MEF2C activity stretch occupies residues 407–781; the sequence is PVASEPGCPD…LADLPDLQEP (375 aa). Pro residues-rich tracts occupy residues 433–445 and 454–463; these read SPPPAPLPCPGPA and QPPPPASEPA. The segment covering 476-486 has biased composition (low complexity); that stretch reads KAALKAALLKS. Composition is skewed to basic and acidic residues over residues 502-519, 527-544, and 563-573; these read PEPRKPVTAQERQREREE, RAKEREKRRQERERKERG, and DNDRSLLERWT. Positions 505–539 match the Nuclear localization signal motif; the sequence is RKPVTAQERQREREEKRRRRQERAKEREKRRQERE. Composition is skewed to pro residues over residues 578–594 and 601–614; these read PPAPAPATARPPSPPAG and GPLPQPACPPPAPA. Composition is skewed to low complexity over residues 615–632 and 642–652; these read AGPAAPQTTAASGLLAPQ and GPSALSVLPYF. Residues 653–664 are compositionally biased toward pro residues; sequence PSGPPPPDPGGA. Residues 668-685 are compositionally biased toward polar residues; sequence STSESPDVTLVTQQLSKS. Phosphoserine is present on S685. T698 carries the phosphothreonine modification.

Belongs to the protein kinase superfamily. CMGC Ser/Thr protein kinase family. MAP kinase subfamily. As to quaternary structure, interacts with MAP2K5. Forms oligomers. Interacts with MEF2A, MEF2C and MEF2D; the interaction phosphorylates the MEF2s and enhances transcriptional activity of MEF2A, MEF2C but not MEF2D. Interacts with SGK1. Interacts with PML. Interacts (via N-terminal half) with HSP90AB1-CDC37 chaperone complex in resting cells; the interaction is MAP2K5-independent and prevents MAPK7 from ubiquitination and proteasomal degradation. Interacts with STUB1/CHIP; the interaction is enhanced in the presence of IGF1 or MAP2K5 and promotes STUB1/CHIP E3 ligase activity. It depends on Mg(2+) as a cofactor. Dually phosphorylated on Thr-219 and Tyr-221, which activates the enzyme.

The protein localises to the cytoplasm. The protein resides in the nucleus. It is found in the PML body. The catalysed reaction is L-seryl-[protein] + ATP = O-phospho-L-seryl-[protein] + ADP + H(+). It catalyses the reaction L-threonyl-[protein] + ATP = O-phospho-L-threonyl-[protein] + ADP + H(+). With respect to regulation, activated by tyrosine and threonine phosphorylation. Activated in response to hyperosmolarity, hydrogen peroxide, and epidermal growth factor (EGF). In terms of biological role, plays a role in various cellular processes such as proliferation, differentiation and cell survival. The upstream activator of MAPK7 is the MAPK kinase MAP2K5. Upon activation, it translocates to the nucleus and phosphorylates various downstream targets including MEF2C. EGF activates MAPK7 through a Ras-independent and MAP2K5-dependent pathway. As part of the MAPK/ERK signaling pathway, acts as a negative regulator of apoptosis in cardiomyocytes via interaction with STUB1/CHIP and promotion of STUB1-mediated ubiquitination and degradation of ICER-type isoforms of CREM. May have a role in muscle cell differentiation. May be important for endothelial function and maintenance of blood vessel integrity. MAP2K5 and MAPK7 interact specifically with one another and not with MEK1/ERK1 or MEK2/ERK2 pathways. Phosphorylates SGK1 at Ser-78 and this is required for growth factor-induced cell cycle progression. Involved in the regulation of p53/TP53 by disrupting the PML-MDM2 interaction. In Bos taurus (Bovine), this protein is Mitogen-activated protein kinase 7 (MAPK7).